The sequence spans 511 residues: MVLLAAAVCTKAGKAIVSRQFVEMTRTRIEGLLAAFPKLMNTGKQHTFVETESVRYVYQPMEKLYMVLITTKNSNILEDLETLRLFSRVIPEYCRALEENEISEHCFDLIFAFDEIVALGYRENVNLAQIRTFTEMDSHEEKVFRAVRETQEREAKAEMRRKAKELQQARRDAERQGKKAPGFGGFGSSAVSGGSTAAMITETIIETDKPKVAPAPARPSGPSKALKLGAKGKEVDNFVDKLKSEGETIMSSNMGKRTSEAAKVHAPPINMESVHMKIEEKITLTCGRDGGLQNMELHGMIMLRISDDKFGRIRLHVENEDKKGVQLQTHPNVDKKLFTAESLIGLKNPEKSFPVNSDVGVLKWRLQTTEESFIPLTINCWPSESGNGCDVNIEYELQEDNLELNDVVITIPLPSGVGAPVIGEIDGEYRHDSRRNTLEWCLPVIDAKNKSGSLEFSIPGQPNDFFPVQVSFISKKNYCNIQVTKVTQVDGNSPVRFSTETTFLVDKYEIL.

Basic and acidic residues predominate over residues 168-177 (QARRDAERQG). A disordered region spans residues 168-188 (QARRDAERQGKKAPGFGGFGS). Residue Ser223 is modified to Phosphoserine. An N6-acetyllysine mark is found at Lys233 and Lys241. Ser244 is subject to Phosphoserine. The 241-residue stretch at 271–511 (MESVHMKIEE…TFLVDKYEIL (241 aa)) folds into the MHD domain. N6-acetyllysine is present on residues Lys309 and Lys351. At Ser493 the chain carries Phosphoserine.

Belongs to the adaptor complexes medium subunit family. Delta-COP subfamily. In terms of assembly, oligomeric complex that consists of at least the alpha, beta, beta', gamma, delta, epsilon and zeta subunits.

The protein localises to the cytoplasm. The protein resides in the golgi apparatus membrane. It is found in the cytoplasmic vesicle. Its subcellular location is the COPI-coated vesicle membrane. In terms of biological role, the coatomer is a cytosolic protein complex that binds to dilysine motifs and reversibly associates with Golgi non-clathrin-coated vesicles, which further mediate biosynthetic protein transport from the ER, via the Golgi up to the trans Golgi network. Coatomer complex is required for budding from Golgi membranes, and is essential for the retrograde Golgi-to-ER transport of dilysine-tagged proteins. In mammals, the coatomer can only be recruited by membranes associated to ADP-ribosylation factors (ARFs), which are small GTP-binding proteins; the complex also influences the Golgi structural integrity, as well as the processing, activity, and endocytic recycling of LDL receptors. This chain is Coatomer subunit delta (Arcn1), found in Rattus norvegicus (Rat).